Reading from the N-terminus, the 164-residue chain is Ribosome-binding factor A (164 aa).

This sequence belongs to the RbfA family. Monomer. Binds 30S ribosomal subunits, but not 50S ribosomal subunits or 70S ribosomes.

It is found in the cytoplasm. Its function is as follows. One of several proteins that assist in the late maturation steps of the functional core of the 30S ribosomal subunit. Associates with free 30S ribosomal subunits (but not with 30S subunits that are part of 70S ribosomes or polysomes). Required for efficient processing of 16S rRNA. May interact with the 5'-terminal helix region of 16S rRNA. The chain is Ribosome-binding factor A from Caulobacter sp. (strain K31).